Consider the following 255-residue polypeptide: Hydroxyacylglutathione hydrolase (255 aa).

Positions 56, 58, 60, 61, 114, 133, and 171 each coordinate Zn(2+).

Belongs to the metallo-beta-lactamase superfamily. Glyoxalase II family. In terms of assembly, monomer. Zn(2+) is required as a cofactor.

It carries out the reaction an S-(2-hydroxyacyl)glutathione + H2O = a 2-hydroxy carboxylate + glutathione + H(+). The protein operates within secondary metabolite metabolism; methylglyoxal degradation; (R)-lactate from methylglyoxal: step 2/2. Functionally, thiolesterase that catalyzes the hydrolysis of S-D-lactoyl-glutathione to form glutathione and D-lactic acid. The sequence is that of Hydroxyacylglutathione hydrolase from Rhodopseudomonas palustris (strain ATCC BAA-98 / CGA009).